The sequence spans 397 residues: DNA-binding protein (397 aa).

2 residues coordinate Zn(2+): cysteine 116 and histidine 118. A flexible loop region spans residues 129–161 (IEMAATSESGVAALKEGRGAVEINRWGRQVVKI). Residues cysteine 169, cysteine 185, cysteine 225, cysteine 227, cysteine 276, and cysteine 289 each coordinate Zn(2+). The interval 335–397 (ALLPEGSVNE…IVLESSEEDE (63 aa)) is C-terminal arm, DBP binding. The segment at 338 to 397 (PEGSVNEDENPFGLDNSEDEEEVVPPSPPSPARKRTRTTVAEVHHKKKKKIVLESSEEDE) is disordered. Residues 342-360 (VNEDENPFGLDNSEDEEEV) show a composition bias toward acidic residues.

It belongs to the adenoviridae E2A DNA-binding protein family. In terms of assembly, homomultimerizes on viral ssDNA bound to pTP. Forms a initiation complex with viral polymerase, pTP and hosts NFIA and POU2F1/OCT1. Interacts with host SRCAP.

It is found in the host nucleus. Plays a role in the elongation phase of viral strand displacement replication by unwinding the template in an ATP-independent fashion, employing its capacity to form multimers. Also enhances the rate of initiation. Released from template upon second strand synthesis. Assembles in complex with viral pTP, viral pol, host NFIA and host POU2F1/OCT1 on viral origin of replication. Covers the whole ssDNA genome during synthesis. The complementary strand synthesis induces its relese from DNA template. May inhibit cellular transcription mediated by the interaction between host SRCAP and CBP. The protein is DNA-binding protein of Snake adenovirus serotype 1 (SnAdV-1).